Consider the following 348-residue polypeptide: MNRTDELRTARIESLVTPAELALRYPVTPGVATHVTDSRRRIEKILNGEDKRLLVIIGPCSIHDLTAAMEYATRLQSLRNQYQSRLEIVMRTYFEKPRTVVGWKGLISDPDLNGSYRVNHGLELARKLLLQVNELGVPTATEFLDMVTGQFIADLISWGAIGARTTESQIHREMASALSCPVGFKNGTDGNTRIAVDAIRAARASHMFLSPDKNGQMTIYQTSGNPYGHIIMRGGKKPNYHADDIAAACDTLHEFDLPEHLVVDFSHGNCQKQHRRQLEVCEDICQQIRNGSTAIAGIMAESFLREGTQKIVGGQPLTYGQSITDPCLGWEDTERLVEKLASAVDTRF.

The protein belongs to the class-I DAHP synthase family.

The enzyme catalyses D-erythrose 4-phosphate + phosphoenolpyruvate + H2O = 7-phospho-2-dehydro-3-deoxy-D-arabino-heptonate + phosphate. Its pathway is metabolic intermediate biosynthesis; chorismate biosynthesis; chorismate from D-erythrose 4-phosphate and phosphoenolpyruvate: step 1/7. Functionally, stereospecific condensation of phosphoenolpyruvate (PEP) and D-erythrose-4-phosphate (E4P) giving rise to 3-deoxy-D-arabino-heptulosonate-7-phosphate (DAHP). This is Phospho-2-dehydro-3-deoxyheptonate aldolase, Trp-sensitive (aroH) from Escherichia coli O6:H1 (strain CFT073 / ATCC 700928 / UPEC).